Consider the following 335-residue polypeptide: Tetraacyldisaccharide 4'-kinase (335 aa).

51-58 is a binding site for ATP; the sequence is HVGGAGKT.

It belongs to the LpxK family.

The catalysed reaction is a lipid A disaccharide + ATP = a lipid IVA + ADP + H(+). It participates in glycolipid biosynthesis; lipid IV(A) biosynthesis; lipid IV(A) from (3R)-3-hydroxytetradecanoyl-[acyl-carrier-protein] and UDP-N-acetyl-alpha-D-glucosamine: step 6/6. Transfers the gamma-phosphate of ATP to the 4'-position of a tetraacyldisaccharide 1-phosphate intermediate (termed DS-1-P) to form tetraacyldisaccharide 1,4'-bis-phosphate (lipid IVA). This Bradyrhizobium sp. (strain ORS 278) protein is Tetraacyldisaccharide 4'-kinase.